The chain runs to 406 residues: Acetate kinase (406 aa).

Asn10 provides a ligand contact to Mg(2+). Lys17 contributes to the ATP binding site. Residue Arg92 coordinates substrate. Asp151 (proton donor/acceptor) is an active-site residue. ATP contacts are provided by residues 211 to 215 (HLGSG), 286 to 288 (DFR), and 335 to 339 (GIGEN). Position 389 (Glu389) interacts with Mg(2+).

The protein belongs to the acetokinase family. In terms of assembly, homodimer. Mg(2+) is required as a cofactor. Requires Mn(2+) as cofactor.

It is found in the cytoplasm. The catalysed reaction is acetate + ATP = acetyl phosphate + ADP. Its pathway is metabolic intermediate biosynthesis; acetyl-CoA biosynthesis; acetyl-CoA from acetate: step 1/2. In terms of biological role, catalyzes the formation of acetyl phosphate from acetate and ATP. Can also catalyze the reverse reaction. The chain is Acetate kinase from Buchnera aphidicola subsp. Cinara cedri (strain Cc).